The primary structure comprises 251 residues: Ubiquinone/menaquinone biosynthesis C-methyltransferase UbiE (251 aa).

S-adenosyl-L-methionine contacts are provided by residues threonine 74, aspartate 95, 123–124 (NA), and serine 140.

This sequence belongs to the class I-like SAM-binding methyltransferase superfamily. MenG/UbiE family.

The enzyme catalyses a 2-demethylmenaquinol + S-adenosyl-L-methionine = a menaquinol + S-adenosyl-L-homocysteine + H(+). It catalyses the reaction a 2-methoxy-6-(all-trans-polyprenyl)benzene-1,4-diol + S-adenosyl-L-methionine = a 5-methoxy-2-methyl-3-(all-trans-polyprenyl)benzene-1,4-diol + S-adenosyl-L-homocysteine + H(+). Its pathway is quinol/quinone metabolism; menaquinone biosynthesis; menaquinol from 1,4-dihydroxy-2-naphthoate: step 2/2. It participates in cofactor biosynthesis; ubiquinone biosynthesis. In terms of biological role, methyltransferase required for the conversion of demethylmenaquinol (DMKH2) to menaquinol (MKH2) and the conversion of 2-polyprenyl-6-methoxy-1,4-benzoquinol (DDMQH2) to 2-polyprenyl-3-methyl-6-methoxy-1,4-benzoquinol (DMQH2). This Photorhabdus laumondii subsp. laumondii (strain DSM 15139 / CIP 105565 / TT01) (Photorhabdus luminescens subsp. laumondii) protein is Ubiquinone/menaquinone biosynthesis C-methyltransferase UbiE.